The sequence spans 251 residues: Adenosine 5'-phosphosulfate reductase (251 aa).

[4Fe-4S] cluster is bound by residues C121, C122, C204, and C207. Residue C232 is the Nucleophile; cysteine thiosulfonate intermediate of the active site.

It belongs to the PAPS reductase family. CysH subfamily. It depends on [4Fe-4S] cluster as a cofactor.

Its subcellular location is the cytoplasm. It catalyses the reaction [thioredoxin]-disulfide + sulfite + AMP + 2 H(+) = adenosine 5'-phosphosulfate + [thioredoxin]-dithiol. The protein operates within sulfur metabolism; hydrogen sulfide biosynthesis; sulfite from sulfate. Catalyzes the formation of sulfite from adenosine 5'-phosphosulfate (APS) using thioredoxin as an electron donor. The sequence is that of Adenosine 5'-phosphosulfate reductase from Sinorhizobium fredii (strain USDA 257).